We begin with the raw amino-acid sequence, 490 residues long: Bifunctional protein HldE (490 aa).

The interval 1-330 (MERKNVESLF…GSMGFQHSDS (330 aa)) is ribokinase. 205-208 (NRKE) serves as a coordination point for ATP. The active site involves D275. The interval 356-490 (FTNGCFDLLH…DKILRAYGEE (135 aa)) is cytidylyltransferase.

It in the N-terminal section; belongs to the carbohydrate kinase PfkB family. In the C-terminal section; belongs to the cytidylyltransferase family. In terms of assembly, homodimer.

The enzyme catalyses D-glycero-beta-D-manno-heptose 7-phosphate + ATP = D-glycero-beta-D-manno-heptose 1,7-bisphosphate + ADP + H(+). The catalysed reaction is D-glycero-beta-D-manno-heptose 1-phosphate + ATP + H(+) = ADP-D-glycero-beta-D-manno-heptose + diphosphate. The protein operates within nucleotide-sugar biosynthesis; ADP-L-glycero-beta-D-manno-heptose biosynthesis; ADP-L-glycero-beta-D-manno-heptose from D-glycero-beta-D-manno-heptose 7-phosphate: step 1/4. Its pathway is nucleotide-sugar biosynthesis; ADP-L-glycero-beta-D-manno-heptose biosynthesis; ADP-L-glycero-beta-D-manno-heptose from D-glycero-beta-D-manno-heptose 7-phosphate: step 3/4. Catalyzes the phosphorylation of D-glycero-D-manno-heptose 7-phosphate at the C-1 position to selectively form D-glycero-beta-D-manno-heptose-1,7-bisphosphate. Its function is as follows. Catalyzes the ADP transfer from ATP to D-glycero-beta-D-manno-heptose 1-phosphate, yielding ADP-D-glycero-beta-D-manno-heptose. The polypeptide is Bifunctional protein HldE (Geobacter metallireducens (strain ATCC 53774 / DSM 7210 / GS-15)).